The primary structure comprises 231 residues: Ribonuclease 3 (231 aa).

One can recognise an RNase III domain in the interval 6-135 (AAMLKERFGI…FVGALYLDQG (130 aa)). E48 provides a ligand contact to Mg(2+). Residue D52 is part of the active site. Mg(2+) is bound by residues D121 and E124. E124 is a catalytic residue. A DRBM domain is found at 161–230 (DYKTTLQEYL…ARQAYSQLQQ (70 aa)). The tract at residues 209–231 (WGHSKKEAEQSAARQAYSQLQQK) is disordered. Residues 220–231 (AARQAYSQLQQK) show a composition bias toward polar residues.

The protein belongs to the ribonuclease III family. As to quaternary structure, homodimer. The cofactor is Mg(2+).

Its subcellular location is the cytoplasm. The enzyme catalyses Endonucleolytic cleavage to 5'-phosphomonoester.. In terms of biological role, digests double-stranded RNA. Involved in the processing of primary rRNA transcript to yield the immediate precursors to the large and small rRNAs (23S and 16S). Processes some mRNAs, and tRNAs when they are encoded in the rRNA operon. Processes pre-crRNA and tracrRNA of type II CRISPR loci if present in the organism. In Lactiplantibacillus plantarum (strain ATCC BAA-793 / NCIMB 8826 / WCFS1) (Lactobacillus plantarum), this protein is Ribonuclease 3.